We begin with the raw amino-acid sequence, 417 residues long: 3-oxo-isoapionate-4-phosphate decarboxylase (417 aa).

Mg(2+)-binding residues include Lys-177, Asp-179, and Glu-180. The residue at position 177 (Lys-177) is an N6-carboxylysine.

This sequence belongs to the RuBisCO large chain family. The cofactor is Mg(2+).

It carries out the reaction 3-oxoisoapionate 4-phosphate + H(+) = L-erythrulose 1-phosphate + CO2. The protein operates within carbohydrate metabolism. In terms of biological role, involved in catabolism of D-apiose. Catalyzes the decarboxylation of 3-oxo-isoapionate 4-phosphate to L-erythrulose 1-phosphate. This Rhizobium etli (strain ATCC 51251 / DSM 11541 / JCM 21823 / NBRC 15573 / CFN 42) protein is 3-oxo-isoapionate-4-phosphate decarboxylase.